Here is a 640-residue protein sequence, read N- to C-terminus: Uromodulin (640 aa).

A signal peptide spans Met-1–Thr-24. An EGF-like 1 domain is found at Glu-28 to Val-64. Cystine bridges form between Cys-32–Cys-41, Cys-35–Cys-50, Cys-52–Cys-63, Cys-69–Cys-83, Cys-77–Cys-92, Cys-94–Cys-106, Cys-112–Cys-126, Cys-120–Cys-135, Cys-137–Cys-148, Cys-150–Cys-161, Cys-155–Cys-170, Cys-174–Cys-267, Cys-195–Cys-282, Cys-217–Cys-255, Cys-223–Cys-287, Cys-248–Cys-256, Cys-297–Cys-306, Cys-300–Cys-315, Cys-317–Cys-347, Cys-335–Cys-425, and Cys-366–Cys-389. Asn-38 carries N-linked (GlcNAc...) asparagine glycosylation. Residues Asp-65–Thr-107 form the EGF-like 2; calcium-binding domain. Residues Asn-76 and Asn-80 are each glycosylated (N-linked (GlcNAc...) asparagine). One can recognise an EGF-like 3; calcium-binding domain in the interval Asp-108–Glu-149. Residues Cys-150–Ala-171 are beta hairpin. Residues Asp-172 to Ser-291 are D10C. N-linked (GlcNAc...) (complex) asparagine glycosylation is present at Asn-232. N-linked (GlcNAc...) (high mannose) asparagine glycosylation is present at Asn-275. One can recognise an EGF-like 4 domain in the interval Ser-292 to Ile-323. Residue Asn-322 is glycosylated (N-linked (GlcNAc...) (complex) asparagine). Residues Glu-334–Leu-429 form a ZP-N region. Positions Glu-334–Ser-589 constitute a ZP domain. Residue Asn-396 is glycosylated (N-linked (GlcNAc...) (complex) asparagine). The segment at Asp-430–Thr-453 is flexible ZP-N/ZP-C linker; important for secretion and polymerization into filaments. Positions Gly-454–Thr-465 are internal hydrophobic patch (IHP). The tract at residues Gly-454–Ser-589 is ZP-C. Disulfide bonds link Cys-506–Cys-566, Cys-527–Cys-582, and Cys-571–Cys-578. Residue Asn-513 is glycosylated (N-linked (GlcNAc...) (complex) asparagine; alternate). The N-linked (GlcNAc...) (high mannose) asparagine; alternate glycan is linked to Asn-513. An essential for cleavage by HPN region spans residues Arg-586–Ser-589. The segment at Val-598–Arg-606 is external hydrophobic patch (EHP); regulates polymerization into filaments. A lipid anchor (GPI-anchor amidated serine) is attached at Ser-614. The propeptide at Arg-615–Gln-640 is removed in mature form.

As to quaternary structure, homodimer that then polymerizes into long filaments. The filaments can additionally assemble laterally to form a sheet. The filaments consist of a zigzag-shaped backbone with laterally protruding arms which interact with bacterial adhesin fimH. Two fimH molecules can bind to a single UMOD monomer. In terms of processing, N-glycosylated. N-glycan heterogeneity at Asn-232: Hex7HexNAc6 (major) and dHex1Hex7HexNAc6 (minor); at Asn-322: dHex1Hex6HexNAc5 (minor), dHex1Hex7HexNAc6 (major) and dHex1Hex8HexNAc7 (minor); at Asn-396: Hex6HexNAc5 (major), dHex1Hex6HexNAc5 (minor) and Hex7HexNAc6 (minor). Glycosylated Asn-232 interacts with E.coli adhesin fimH. Other complex glycosylation sites may serve as binding sites for proteins from other bacteria inclduding K.pneumoniae, P.aeruginosa and S.mitis. Proteolytically cleaved at a conserved C-terminal proteolytic cleavage site to generate the secreted form found in urine. This cleavage is catalyzed by HPN. As to expression, expressed in the tubular cells of the kidney. Most abundant protein in normal urine (at protein level). Synthesized exclusively in the kidney. Expressed exclusively by epithelial cells of the thick ascending limb of Henle's loop (TALH) and of distal convoluted tubule lumen.

It localises to the apical cell membrane. Its subcellular location is the basolateral cell membrane. The protein localises to the cell projection. The protein resides in the cilium membrane. It is found in the secreted. In terms of biological role, functions in biogenesis and organization of the apical membrane of epithelial cells of the thick ascending limb of Henle's loop (TALH), where it promotes formation of complex filamentous gel-like structure that may play a role in the water barrier permeability. May serve as a receptor for binding and endocytosis of cytokines (IL-1, IL-2) and TNF. Facilitates neutrophil migration across renal epithelia. Its function is as follows. In the urine, may contribute to colloid osmotic pressure, retards passage of positively charged electrolytes, and inhibits formation of liquid containing supersaturated salts and subsequent formation of salt crystals. Protects against urinary tract infections by binding to type 1 fimbriated E.coli. Binds to bacterial adhesin fimH which mediates the stable formation of bacterial aggregates, prevents the binding of E.coli to uroplakins UPK1A and UPK1B which act as urothelial receptors for type I fimbriae, and allows for pathogen clearance through micturation. Also promotes aggregation of other bacteria including K.pneumoniae, P.aeruginosa and S.mitis and so may also protect against other uropathogens. The polypeptide is Uromodulin (UMOD) (Homo sapiens (Human)).